We begin with the raw amino-acid sequence, 183 residues long: ATP-dependent protease subunit HslV (183 aa).

Thr2 is a catalytic residue. Na(+) is bound by residues Gly157, Cys160, and Thr163.

This sequence belongs to the peptidase T1B family. HslV subfamily. In terms of assembly, a double ring-shaped homohexamer of HslV is capped on each side by a ring-shaped HslU homohexamer. The assembly of the HslU/HslV complex is dependent on binding of ATP.

The protein localises to the cytoplasm. It catalyses the reaction ATP-dependent cleavage of peptide bonds with broad specificity.. Its activity is regulated as follows. Allosterically activated by HslU binding. Its function is as follows. Protease subunit of a proteasome-like degradation complex believed to be a general protein degrading machinery. The sequence is that of ATP-dependent protease subunit HslV from Vibrio parahaemolyticus serotype O3:K6 (strain RIMD 2210633).